A 158-amino-acid chain; its full sequence is SsrA-binding protein (158 aa).

This sequence belongs to the SmpB family.

Its subcellular location is the cytoplasm. Functionally, required for rescue of stalled ribosomes mediated by trans-translation. Binds to transfer-messenger RNA (tmRNA), required for stable association of tmRNA with ribosomes. tmRNA and SmpB together mimic tRNA shape, replacing the anticodon stem-loop with SmpB. tmRNA is encoded by the ssrA gene; the 2 termini fold to resemble tRNA(Ala) and it encodes a 'tag peptide', a short internal open reading frame. During trans-translation Ala-aminoacylated tmRNA acts like a tRNA, entering the A-site of stalled ribosomes, displacing the stalled mRNA. The ribosome then switches to translate the ORF on the tmRNA; the nascent peptide is terminated with the 'tag peptide' encoded by the tmRNA and targeted for degradation. The ribosome is freed to recommence translation, which seems to be the essential function of trans-translation. The polypeptide is SsrA-binding protein (Saccharopolyspora erythraea (strain ATCC 11635 / DSM 40517 / JCM 4748 / NBRC 13426 / NCIMB 8594 / NRRL 2338)).